The primary structure comprises 280 residues: P32 adhesin (280 aa).

A run of 2 helical transmembrane segments spans residues 13-37 and 68-92; these read FIVL…ALVV and WFIP…AIGL. Residues 114–128 show a composition bias toward polar residues; the sequence is EQLQRISDQQEQQTV. Disordered stretches follow at residues 114 to 149 and 163 to 280; these read EQLQ…QPLQ and FNPN…GLKP. 2 stretches are compositionally biased toward low complexity: residues 132–149 and 168–188; these read PQQS…QPLQ and QQRP…NFNP. A run of 13 repeats spans residues 163 to 168, 170 to 174, 186 to 190, 191 to 195, 196 to 200, 199 to 204, 206 to 210, 222 to 226, 227 to 231, 232 to 236, 249 to 254, 256 to 260, and 259 to 264. The tract at residues 163–264 is 6 X 5 AA repeats of [FM]-N-P-N-M-Q; it reads FNPNMQQRPG…QRPGFNPNMQ (102 aa). The tract at residues 170–260 is 5 X 5 AA repeats of R-P-G-F-N; sequence RPGFNQPNQQ…PNMQQRPGFN (91 aa). The segment at 186 to 226 is 2 X 5 AA repeats of F-N-P-R-M; sequence FNPRMNPNMQRPGFNPNMQQRPGFNQPNQQFQPHNNFNPRM. Low complexity predominate over residues 204-224; the sequence is QQRPGFNQPNQQFQPHNNFNP. Over residues 235–257 the composition is skewed to low complexity; sequence FNQPHPNQFAQPNNFNPNMQQRP. Residues 261-271 are compositionally biased toward polar residues; sequence PNMQQRPNPSQ.

Its subcellular location is the cell projection. The protein resides in the attachment organelle membrane. Adhesin necessary for successful cytadherence and virulence. The chain is P32 adhesin from Mycoplasma genitalium (strain ATCC 33530 / DSM 19775 / NCTC 10195 / G37) (Mycoplasmoides genitalium).